The sequence spans 293 residues: Glycine--tRNA ligase alpha subunit (293 aa).

Belongs to the class-II aminoacyl-tRNA synthetase family. Tetramer of two alpha and two beta subunits.

The protein resides in the cytoplasm. The catalysed reaction is tRNA(Gly) + glycine + ATP = glycyl-tRNA(Gly) + AMP + diphosphate. This chain is Glycine--tRNA ligase alpha subunit, found in Sulfurimonas denitrificans (strain ATCC 33889 / DSM 1251) (Thiomicrospira denitrificans (strain ATCC 33889 / DSM 1251)).